The chain runs to 225 residues: Probable methylthioribulose-1-phosphate dehydratase (225 aa).

A substrate-binding site is contributed by C86. Zn(2+) contacts are provided by H104 and H106. The active-site Proton donor/acceptor is E127. H183 contacts Zn(2+).

It belongs to the aldolase class II family. MtnB subfamily. It depends on Zn(2+) as a cofactor.

Its subcellular location is the cytoplasm. The catalysed reaction is 5-(methylsulfanyl)-D-ribulose 1-phosphate = 5-methylsulfanyl-2,3-dioxopentyl phosphate + H2O. It functions in the pathway amino-acid biosynthesis; L-methionine biosynthesis via salvage pathway; L-methionine from S-methyl-5-thio-alpha-D-ribose 1-phosphate: step 2/6. Its function is as follows. Catalyzes the dehydration of methylthioribulose-1-phosphate (MTRu-1-P) into 2,3-diketo-5-methylthiopentyl-1-phosphate (DK-MTP-1-P). The sequence is that of Probable methylthioribulose-1-phosphate dehydratase from Leishmania infantum.